The following is a 1533-amino-acid chain: Glycogen debranching enzyme (1533 aa).

Serine 64 is subject to Phosphoserine. Active-site residues include aspartate 527, histidine 530, and aspartate 628.

It belongs to the glycogen debranching enzyme family. Monomer. Interacts with NHLRC1/malin. Ubiquitinated. In terms of tissue distribution, ubiquitous. Expressed in striated skeletal muscle, heart, liver, spleen, skin, spinal cord, lung, kidney and testicle.

The protein localises to the cytoplasm. The enzyme catalyses Transfers a segment of a (1-&gt;4)-alpha-D-glucan to a new position in an acceptor, which may be glucose or a (1-&gt;4)-alpha-D-glucan.. The catalysed reaction is Hydrolysis of (1-&gt;6)-alpha-D-glucosidic branch linkages in glycogen phosphorylase limit dextrin.. Functionally, multifunctional enzyme acting as 1,4-alpha-D-glucan:1,4-alpha-D-glucan 4-alpha-D-glycosyltransferase and amylo-1,6-glucosidase in glycogen degradation. This Equus caballus (Horse) protein is Glycogen debranching enzyme.